A 260-amino-acid chain; its full sequence is 2-amino-5-formylamino-6-ribosylaminopyrimidin-4(3H)-one 5'-monophosphate deformylase (260 aa).

The Fe cation site is built by E33, H35, D44, and H112.

This sequence belongs to the creatininase superfamily. FAPy deformylase family. As to quaternary structure, homodimer. Fe(2+) is required as a cofactor. It depends on Zn(2+) as a cofactor.

The enzyme catalyses 2-amino-5-formylamino-6-(5-phospho-D-ribosylamino)pyrimidin-4(3H)-one + H2O = 2,5-diamino-6-(1-D-ribosylamino)pyrimidin-4(3H)-one 5'-phosphate + formate + H(+). Its pathway is cofactor biosynthesis; coenzyme F420 biosynthesis. It participates in cofactor biosynthesis; riboflavin biosynthesis. Its function is as follows. Catalyzes the hydrolysis of the formamide of 2-amino-5-formylamino-6-ribosylamino-4(3H)-pyrimidinone 5'-monophosphate (FAPy) to form 2,5-diamino-6-ribosylamino-4(3H)-pyrimidinone 5'-phosphate (APy). The chain is 2-amino-5-formylamino-6-ribosylaminopyrimidin-4(3H)-one 5'-monophosphate deformylase from Methanococcus voltae (strain ATCC BAA-1334 / A3).